The primary structure comprises 154 residues: SsrA-binding protein (154 aa).

A disordered region spans residues 126-154 (GKKKYDKREDMKKKEAQREVERAFRERQK). Positions 131–154 (DKREDMKKKEAQREVERAFRERQK) are enriched in basic and acidic residues.

The protein belongs to the SmpB family.

The protein resides in the cytoplasm. In terms of biological role, required for rescue of stalled ribosomes mediated by trans-translation. Binds to transfer-messenger RNA (tmRNA), required for stable association of tmRNA with ribosomes. tmRNA and SmpB together mimic tRNA shape, replacing the anticodon stem-loop with SmpB. tmRNA is encoded by the ssrA gene; the 2 termini fold to resemble tRNA(Ala) and it encodes a 'tag peptide', a short internal open reading frame. During trans-translation Ala-aminoacylated tmRNA acts like a tRNA, entering the A-site of stalled ribosomes, displacing the stalled mRNA. The ribosome then switches to translate the ORF on the tmRNA; the nascent peptide is terminated with the 'tag peptide' encoded by the tmRNA and targeted for degradation. The ribosome is freed to recommence translation, which seems to be the essential function of trans-translation. The polypeptide is SsrA-binding protein (Anoxybacillus flavithermus (strain DSM 21510 / WK1)).